The following is a 209-amino-acid chain: Nascent polypeptide-associated complex subunit alpha-like protein 5 (209 aa).

The disordered stretch occupies residues 23–71 (EKEDDVVVEDVKDGEEEDDDEDDEDVEVEGEGGNENAKQSRSEKKSRKA). Residues 25-54 (EDDVVVEDVKDGEEEDDDEDDEDVEVEGEG) are compositionally biased toward acidic residues. The NAC-A/B domain maps to 62–127 (SRSEKKSRKA…AKVDDLSSQL (66 aa)). Positions 170–207 (VEARDIDLVMTQAGVSKAKAVSALKANDGDIVSAIMEL) constitute a UBA domain.

The protein belongs to the NAC-alpha family.

In terms of biological role, may promote appropriate targeting of ribosome-nascent polypeptide complexes. The polypeptide is Nascent polypeptide-associated complex subunit alpha-like protein 5 (Arabidopsis thaliana (Mouse-ear cress)).